A 319-amino-acid polypeptide reads, in one-letter code: Forkhead box protein B1 (319 aa).

Positions 13–107 (KPPYSYISLT…ENGSFLRRRK (95 aa)) form a DNA-binding region, fork-head. A disordered region spans residues 278 to 310 (LSNSSPSMSPTSPQTATSQSSPATPSDTLTNPS). Low complexity predominate over residues 279-305 (SNSSPSMSPTSPQTATSQSSPATPSDT).

In terms of tissue distribution, in early gastrulae, expressed in the inner layer of the posterior dorsal ectoderm and in non-involuted mesoderm. By the mid-gastrula stage, expressed solely in the posterior ectoderm. At the end of gastrulation, expressed in ectodermal regions fated to become diencephalon, midbrain and hindbrain, and weakly expressed in regions fated to become spinal cord and tailbud. At the neurula stage, expressed in the midbrain and posterior forebrain (diencephalon) but not in the more anterior forebrain (telencephalon). Also expressed posteriorly in rhombomere 5. At tailbud stages, expression remains in the anterior brain and is also detectable along the length of the central nervous system and in the tailbud.

The protein localises to the nucleus. In terms of biological role, probable transcription factor. May be involved in the early anteroposterior patterning of the neuroectoderm. The polypeptide is Forkhead box protein B1 (Xenopus laevis (African clawed frog)).